Reading from the N-terminus, the 65-residue chain is Small ribosomal subunit protein bS21 (65 aa).

This sequence belongs to the bacterial ribosomal protein bS21 family.

The protein is Small ribosomal subunit protein bS21 of Geotalea daltonii (strain DSM 22248 / JCM 15807 / FRC-32) (Geobacter daltonii).